The chain runs to 699 residues: MTLVMSPDSSYGRYDAPTPTDVTSPVHREREPELHIEFDGTTVLCRVCGDKASGFHYGVHSCEGCKGFFRRSIQQKIQYRPCTKNQQCSILRINRNRCQYCRLKKCIAVGMSRDAVRFGRVPKREKARILAAMQQSSTSRAHEQAAAAELDDAPRLLARVVRAHLDTCEFTRDRVAAMRARARDCPTYSQPTLACPLNPAPELQSEKEFSQRFAHVIRGVIDFAGLIPGFQLLTQDDKFTLLKSGLFDALFVRLICMFDAPLNSIICLNGQLMKRDSIQSGANARFLVDSTFKFAERMNSMNLTDAEIGLFCAIVLITPDRPGLRNVELVERMHTRLKACLQTVIAQNRPDRPGFLRELMDTLPDLRTLSTLHTEKLVVFRTEHKELLRQQMWSEEEAVSWVDSGADELARSPIGSVSSSESGEAVGDCGTPLLAATLAGRRRLDSRGSVDEEALGVAHLAHNGLTVTPVRQPPRYRKLDSPTDSGIESGNEKHERIVGTGSGCSSPRSSLEEHNEDRRPPVSADDMPVLKRVLQAPPLYGGTPSLMDEAYRRHKKFRALRRDTGEAEARTVRPTPSPQPQHPHPANPAHPAHSPRPQRASLSSTHSVLAKSLMEGPRMTPEQLKRTDIIQQYMRRGESSAPAEGCPLRAGGLLTCYRGASPAPQPVLALQVDVTDAPLNLSKKSPSPPRTYMPQMLEA.

The disordered stretch occupies residues 1–31; the sequence is MTLVMSPDSSYGRYDAPTPTDVTSPVHRERE. Positions 42–118 form a DNA-binding region, nuclear receptor; it reads TVLCRVCGDK…VGMSRDAVRF (77 aa). 2 consecutive NR C4-type zinc fingers follow at residues 45-65 and 82-106; these read CRVCGDKASGFHYGVHSCEGC and CTKNQQCSILRINRNRCQYCRLKKC. The NR LBD domain maps to 152–399; sequence DAPRLLARVV…QQMWSEEEAV (248 aa). Disordered stretches follow at residues 466-528, 561-607, and 679-699; these read TVTP…DDMP, RRDT…STHS, and LNLSKKSPSPPRTYMPQMLEA. 2 stretches are compositionally biased toward basic and acidic residues: residues 510–520 and 561–571; these read SLEEHNEDRRP and RRDTGEAEART. A compositionally biased stretch (pro residues) spans 575–588; sequence TPSPQPQHPHPANP.

Belongs to the nuclear hormone receptor family. NR1 subfamily.

It is found in the nucleus. Functionally, implicated in the regulation of ecdysone-triggered gene hierarchies. Probably plays a key role in mediating the regulation of the larval molt by 20-OH-ecdysone. The protein is Ecdysone-inducible protein E75 (E75) of Manduca sexta (Tobacco hawkmoth).